The chain runs to 136 residues: Large ribosomal subunit protein uL16 (136 aa).

The protein belongs to the universal ribosomal protein uL16 family. Part of the 50S ribosomal subunit.

Functionally, binds 23S rRNA and is also seen to make contacts with the A and possibly P site tRNAs. The chain is Large ribosomal subunit protein uL16 from Shewanella halifaxensis (strain HAW-EB4).